The sequence spans 883 residues: Translation initiation factor IF-2 (883 aa).

Disordered regions lie at residues lysine 52–glutamate 102 and valine 115–proline 297. 2 stretches are compositionally biased toward basic and acidic residues: residues valine 115–threonine 179 and alanine 204–alanine 237. A compositionally biased stretch (low complexity) spans lysine 239–lysine 248. The segment covering proline 265 to arginine 275 has biased composition (basic residues). Low complexity predominate over residues arginine 276–lysine 285. Positions proline 383–glutamate 550 constitute a tr-type G domain. The segment at glycine 392–threonine 399 is G1. Position 392 to 399 (glycine 392 to threonine 399) interacts with GTP. The interval glycine 417–histidine 421 is G2. The segment at aspartate 438–glycine 441 is G3. Residues aspartate 438–histidine 442 and asparagine 492–aspartate 495 each bind GTP. The segment at asparagine 492–aspartate 495 is G4. Residues serine 528–lysine 530 are G5.

Belongs to the TRAFAC class translation factor GTPase superfamily. Classic translation factor GTPase family. IF-2 subfamily.

It is found in the cytoplasm. One of the essential components for the initiation of protein synthesis. Protects formylmethionyl-tRNA from spontaneous hydrolysis and promotes its binding to the 30S ribosomal subunits. Also involved in the hydrolysis of GTP during the formation of the 70S ribosomal complex. This chain is Translation initiation factor IF-2, found in Alkalilimnicola ehrlichii (strain ATCC BAA-1101 / DSM 17681 / MLHE-1).